Consider the following 314-residue polypeptide: DNA-directed RNA polymerase subunit alpha (314 aa).

The segment at 1 to 228 (MAQFHYECVE…SLFEPLKDIT (228 aa)) is alpha N-terminal domain (alpha-NTD). An alpha C-terminal domain (alpha-CTD) region spans residues 240-314 (DPTSQIPIEE…LPQEKVAKAT (75 aa)).

Belongs to the RNA polymerase alpha chain family. As to quaternary structure, in cyanobacteria the RNAP catalytic core is composed of 2 alpha, 1 beta, 1 beta', 1 gamma and 1 omega subunit. When a sigma factor is associated with the core the holoenzyme is formed, which can initiate transcription.

It catalyses the reaction RNA(n) + a ribonucleoside 5'-triphosphate = RNA(n+1) + diphosphate. Functionally, DNA-dependent RNA polymerase catalyzes the transcription of DNA into RNA using the four ribonucleoside triphosphates as substrates. The chain is DNA-directed RNA polymerase subunit alpha from Trichodesmium erythraeum (strain IMS101).